The primary structure comprises 721 residues: 1,4-alpha-glucan branching enzyme GlgB (721 aa).

D404 functions as the Nucleophile in the catalytic mechanism. E457 acts as the Proton donor in catalysis.

Belongs to the glycosyl hydrolase 13 family. GlgB subfamily. In terms of assembly, monomer.

The catalysed reaction is Transfers a segment of a (1-&gt;4)-alpha-D-glucan chain to a primary hydroxy group in a similar glucan chain.. The protein operates within glycan biosynthesis; glycogen biosynthesis. Catalyzes the formation of the alpha-1,6-glucosidic linkages in glycogen by scission of a 1,4-alpha-linked oligosaccharide from growing alpha-1,4-glucan chains and the subsequent attachment of the oligosaccharide to the alpha-1,6 position. The chain is 1,4-alpha-glucan branching enzyme GlgB from Bradyrhizobium diazoefficiens (strain JCM 10833 / BCRC 13528 / IAM 13628 / NBRC 14792 / USDA 110).